The chain runs to 185 residues: NAD(P)H-quinone oxidoreductase subunit J (185 aa).

This sequence belongs to the complex I 30 kDa subunit family. As to quaternary structure, NDH-1 can be composed of about 15 different subunits; different subcomplexes with different compositions have been identified which probably have different functions.

It is found in the cellular thylakoid membrane. The enzyme catalyses a plastoquinone + NADH + (n+1) H(+)(in) = a plastoquinol + NAD(+) + n H(+)(out). The catalysed reaction is a plastoquinone + NADPH + (n+1) H(+)(in) = a plastoquinol + NADP(+) + n H(+)(out). In terms of biological role, NDH-1 shuttles electrons from an unknown electron donor, via FMN and iron-sulfur (Fe-S) centers, to quinones in the respiratory and/or the photosynthetic chain. The immediate electron acceptor for the enzyme in this species is believed to be plastoquinone. Couples the redox reaction to proton translocation, and thus conserves the redox energy in a proton gradient. Cyanobacterial NDH-1 also plays a role in inorganic carbon-concentration. In Prochlorococcus marinus (strain MIT 9303), this protein is NAD(P)H-quinone oxidoreductase subunit J.